Here is a 211-residue protein sequence, read N- to C-terminus: Uracil phosphoribosyltransferase (211 aa).

Lys30–Arg34 contributes to the GTP binding site. Residues Arg79, Arg104, and Asp133–Thr141 each bind 5-phospho-alpha-D-ribose 1-diphosphate. Uracil contacts are provided by residues Ile197 and Gly202–Ala204. Residue Asp203 coordinates 5-phospho-alpha-D-ribose 1-diphosphate.

Belongs to the UPRTase family. Requires Mg(2+) as cofactor.

It catalyses the reaction UMP + diphosphate = 5-phospho-alpha-D-ribose 1-diphosphate + uracil. Its pathway is pyrimidine metabolism; UMP biosynthesis via salvage pathway; UMP from uracil: step 1/1. Allosterically activated by GTP. In terms of biological role, catalyzes the conversion of uracil and 5-phospho-alpha-D-ribose 1-diphosphate (PRPP) to UMP and diphosphate. The sequence is that of Uracil phosphoribosyltransferase from Pyrobaculum arsenaticum (strain DSM 13514 / JCM 11321 / PZ6).